The sequence spans 328 residues: uncharacterized protein (328 aa).

The SIS domain maps to 37-179; the sequence is LTERLLCHQG…AMTVLRCRKI (143 aa). ATP is bound at residue 52 to 57; sequence GIGKSG. 2 consecutive CBS domains span residues 205–264 and 273–328; these read LSPR…GGAI and MTRK…AGLL.

Belongs to the SIS family. GutQ/KpsF subfamily.

This is an uncharacterized protein from Chlamydia muridarum (strain MoPn / Nigg).